The chain runs to 154 residues: MTAAPNDWDVVLRPHWTPLFAYAAAFLIAVAHVAGGLLLKVGSSGVVFQTADQVAMGALGLVLAGAVLLFARPRLRVGSAGLSVRNLLGDRIVGWSEVIGVSFPGGSRWARIDLADDEYIPVMAIQAVDKDRAVAAMDTVRSLLARYRPDLCAR.

The next 2 membrane-spanning stretches (helical) occupy residues 19 to 39 (LFAYAAAFLIAVAHVAGGLLL) and 51 to 71 (ADQVAMGALGLVLAGAVLLFA).

It is found in the cell membrane. This is an uncharacterized protein from Mycobacterium tuberculosis (strain CDC 1551 / Oshkosh).